A 207-amino-acid chain; its full sequence is Ribosomal RNA large subunit methyltransferase E (207 aa).

S-adenosyl-L-methionine is bound by residues G60, W62, D80, D96, and D121. Residue K161 is the Proton acceptor of the active site.

The protein belongs to the class I-like SAM-binding methyltransferase superfamily. RNA methyltransferase RlmE family.

It is found in the cytoplasm. It carries out the reaction uridine(2552) in 23S rRNA + S-adenosyl-L-methionine = 2'-O-methyluridine(2552) in 23S rRNA + S-adenosyl-L-homocysteine + H(+). In terms of biological role, specifically methylates the uridine in position 2552 of 23S rRNA at the 2'-O position of the ribose in the fully assembled 50S ribosomal subunit. The protein is Ribosomal RNA large subunit methyltransferase E of Methylobacillus flagellatus (strain ATCC 51484 / DSM 6875 / VKM B-1610 / KT).